Reading from the N-terminus, the 612-residue chain is Proton pump-interactor 1 (612 aa).

The interval 1-58 (MGVEVVNSGGFEVAPAPFEGKPEKNGKLDQGKGDDAPINFGSVGELPKNAEENNNKVV) is disordered. A compositionally biased stretch (basic and acidic residues) spans 20–35 (GKPEKNGKLDQGKGDD). Coiled-coil stretches lie at residues 90 to 113 (PKIKAKLDLADKELEKLNKARTGV) and 251 to 314 (LDGV…NSEY). Basic and acidic residues-rich tracts occupy residues 374 to 387 (LSRDGRMRNPDEKP), 434 to 446 (EKAKDAVKVKNVA), 459 to 498 (PQKEEKPVDAATAKEMRKQEEIAKAKQAMERKKKLAEKAA), and 505 to 519 (AQKEAEKKEKKEQEK). Positions 374–572 (LSRDGRMRNP…PIRNRTRGRG (199 aa)) are disordered. Positions 466–526 (VDAATAKEMR…QEKKAKKKTG (61 aa)) form a coiled coil. Over residues 531-545 (TETEEVPEASEEEIE) the composition is skewed to acidic residues. Ser540 is subject to Phosphoserine. Positions 549 to 564 (QEEKPQKEKVFKEKPI) are enriched in basic and acidic residues. A helical transmembrane segment spans residues 591 to 611 (VYAAPAALVVLLLLVLGYYYV).

The protein belongs to the plant Proton pump-interactor protein family. Interacts with AHA1 via N-terminal region. In terms of tissue distribution, strongly expressed in root and shoot vascular systems, particularly in meristematic and sink tissues. Also present in pollen, stigmas and siliques, but not in developing embryos.

It localises to the cell membrane. The protein localises to the endoplasmic reticulum membrane. Its function is as follows. Promotes AHA1 plasma membrane ATPase activity by binding to a site different from the 14-3-3 binding site. The protein is Proton pump-interactor 1 (PPI1) of Arabidopsis thaliana (Mouse-ear cress).